Consider the following 296-residue polypeptide: MAQNYKDELSGVETTGHEWDGLRELNNPLPKWWLYLFYVCIAWAMVYYVFYPAWPLGKTYTKGILGYSQREELDSKLAEAKAGQAKYLTAIAAKSVDEIQKDKDLLGFAMAGGRSYFNENCAACHGAGGQGAKGFPTLADDVWLWGGTSADIYKTIQHGIRSDDGDTRGTPGTGMTAFGKDGILTRDQIDQVTDYVLSLNGKAADAGKVAKGKTVYDENCAACHGDTAQGALAAGVDGVGAPPLKQANWLYGGDKATLVETVTNGRAGVMPAWSKRLDDATIKSLAVYVHNLGGGK.

The Cytoplasmic segment spans residues 1-31 (MAQNYKDELSGVETTGHEWDGLRELNNPLPK). Residues 32–52 (WWLYLFYVCIAWAMVYYVFYP) traverse the membrane as a helical segment. Residues 53–296 (AWPLGKTYTK…VYVHNLGGGK (244 aa)) lie on the Periplasmic side of the membrane. Cytochrome c domains follow at residues 108-200 (FAMA…LSLN) and 207-293 (GKVA…HNLG). The heme c site is built by Cys-121, Cys-124, His-125, Met-175, Cys-220, Cys-223, His-224, and Met-270.

This sequence belongs to the CcoP / FixP family. As to quaternary structure, component of the cbb3-type cytochrome c oxidase at least composed of CcoN, CcoO, CcoQ and CcoP. Requires heme c as cofactor.

Its subcellular location is the cell inner membrane. Its pathway is energy metabolism; oxidative phosphorylation. Functionally, C-type cytochrome. Part of the cbb3-type cytochrome c oxidase complex. CcoP subunit is required for transferring electrons from donor cytochrome c via its heme groups to CcoO subunit. From there, electrons are shuttled to the catalytic binuclear center of CcoN subunit where oxygen reduction takes place. The complex also functions as a proton pump. The protein is Cbb3-type cytochrome c oxidase subunit CcoP of Azospirillum sp. (strain B510).